The following is a 218-amino-acid chain: Ribose-5-phosphate isomerase A (218 aa).

Residues 28 to 31 (TGST), 81 to 84 (DGAD), and 94 to 97 (KGGG) each bind substrate. Glutamate 103 functions as the Proton acceptor in the catalytic mechanism. A substrate-binding site is contributed by lysine 121.

The protein belongs to the ribose 5-phosphate isomerase family. As to quaternary structure, homodimer.

The catalysed reaction is aldehydo-D-ribose 5-phosphate = D-ribulose 5-phosphate. It functions in the pathway carbohydrate degradation; pentose phosphate pathway; D-ribose 5-phosphate from D-ribulose 5-phosphate (non-oxidative stage): step 1/1. Catalyzes the reversible conversion of ribose-5-phosphate to ribulose 5-phosphate. This is Ribose-5-phosphate isomerase A from Colwellia psychrerythraea (strain 34H / ATCC BAA-681) (Vibrio psychroerythus).